Reading from the N-terminus, the 89-residue chain is Small ribosomal subunit protein uS15 (89 aa).

A disordered region spans residues 1-24 (MSLNAEQKSEIVEQFRRSPSDTGS). The segment covering 7–19 (QKSEIVEQFRRSP) has biased composition (basic and acidic residues).

The protein belongs to the universal ribosomal protein uS15 family. As to quaternary structure, part of the 30S ribosomal subunit. Forms a bridge to the 50S subunit in the 70S ribosome, contacting the 23S rRNA.

One of the primary rRNA binding proteins, it binds directly to 16S rRNA where it helps nucleate assembly of the platform of the 30S subunit by binding and bridging several RNA helices of the 16S rRNA. Functionally, forms an intersubunit bridge (bridge B4) with the 23S rRNA of the 50S subunit in the ribosome. The sequence is that of Small ribosomal subunit protein uS15 from Halorhodospira halophila (strain DSM 244 / SL1) (Ectothiorhodospira halophila (strain DSM 244 / SL1)).